The chain runs to 86 residues: DNA-directed RNA polymerase subunit omega (86 aa).

This sequence belongs to the RNA polymerase subunit omega family. In terms of assembly, the RNAP catalytic core consists of 2 alpha, 1 beta, 1 beta' and 1 omega subunit. When a sigma factor is associated with the core the holoenzyme is formed, which can initiate transcription.

The enzyme catalyses RNA(n) + a ribonucleoside 5'-triphosphate = RNA(n+1) + diphosphate. Its function is as follows. Promotes RNA polymerase assembly. Latches the N- and C-terminal regions of the beta' subunit thereby facilitating its interaction with the beta and alpha subunits. This Agathobacter rectalis (strain ATCC 33656 / DSM 3377 / JCM 17463 / KCTC 5835 / VPI 0990) (Eubacterium rectale) protein is DNA-directed RNA polymerase subunit omega.